A 268-amino-acid polypeptide reads, in one-letter code: Tryptophan synthase alpha chain (268 aa).

Catalysis depends on proton acceptor residues Glu-49 and Asp-60.

It belongs to the TrpA family. Tetramer of two alpha and two beta chains.

It catalyses the reaction (1S,2R)-1-C-(indol-3-yl)glycerol 3-phosphate + L-serine = D-glyceraldehyde 3-phosphate + L-tryptophan + H2O. Its pathway is amino-acid biosynthesis; L-tryptophan biosynthesis; L-tryptophan from chorismate: step 5/5. Its function is as follows. The alpha subunit is responsible for the aldol cleavage of indoleglycerol phosphate to indole and glyceraldehyde 3-phosphate. In Xanthomonas oryzae pv. oryzae (strain PXO99A), this protein is Tryptophan synthase alpha chain.